The following is a 230-amino-acid chain: Probable carboxylesterase Culp2 (230 aa).

Positions 1–32 (MNDLLTRRLLTMGAAAAMLAAVLLLTPITVPA) form a signal peptide, tat-type signal. A disulfide bridge links C45 with C112. S123 serves as the catalytic Nucleophile. An intrachain disulfide couples C185 to C192. The active site involves D189. H207 acts as the Proton donor/acceptor in catalysis.

This sequence belongs to the cutinase family. Predicted to be exported by the Tat system. The position of the signal peptide cleavage has not been experimentally proven.

The protein localises to the secreted. It localises to the cell surface. This Mycobacterium bovis (strain ATCC BAA-935 / AF2122/97) protein is Probable carboxylesterase Culp2 (cut2).